The primary structure comprises 312 residues: tRNA uridine(34) hydroxylase (312 aa).

A Rhodanese domain is found at R130 to L225. Residue C185 is the Cysteine persulfide intermediate of the active site.

Belongs to the TrhO family.

The catalysed reaction is uridine(34) in tRNA + AH2 + O2 = 5-hydroxyuridine(34) in tRNA + A + H2O. Functionally, catalyzes oxygen-dependent 5-hydroxyuridine (ho5U) modification at position 34 in tRNAs. The protein is tRNA uridine(34) hydroxylase of Corynebacterium efficiens (strain DSM 44549 / YS-314 / AJ 12310 / JCM 11189 / NBRC 100395).